The following is a 371-amino-acid chain: Cytochrome b (371 aa).

Transmembrane regions (helical) follow at residues 25 to 45, 69 to 90, 105 to 125, and 170 to 190; these read FGSMLLTCSALQVMTGFSLSM, WVMQNLHAIGASMFFICIYMYI, WLSGTTLLIMLMATAFFGYVL, and FFALHFILPFGIISVSSIHIM. His75 contributes to the heme b binding site. Heme b contacts are provided by His174 and His188. An a ubiquinone-binding site is contributed by His193. A run of 4 helical transmembrane segments spans residues 218 to 238, 280 to 300, 312 to 332, and 339 to 358; these read YKDILMISIMIITLLLTVSFF, LGGALALVMSIMILFTMPFTH, LMQFMFWTLVATFVIITWTAT, and FTTISQVASIIYFTFFMSNP.

It belongs to the cytochrome b family. In terms of assembly, the cytochrome bc1 complex contains 3 respiratory subunits (MT-CYB, CYC1 and UQCRFS1), 2 core proteins (UQCRC1 and UQCRC2) and probably 6 low-molecular weight proteins. The cofactor is heme b.

It localises to the mitochondrion inner membrane. Its function is as follows. Component of the ubiquinol-cytochrome c reductase complex (complex III or cytochrome b-c1 complex) that is part of the mitochondrial respiratory chain. The b-c1 complex mediates electron transfer from ubiquinol to cytochrome c. Contributes to the generation of a proton gradient across the mitochondrial membrane that is then used for ATP synthesis. In Candoia aspera (New Guinea boa), this protein is Cytochrome b (MT-CYB).